The chain runs to 127 residues: Ribonuclease P protein component 1 (127 aa).

This sequence belongs to the eukaryotic/archaeal RNase P protein component 1 family. In terms of assembly, consists of a catalytic RNA component and at least 5 protein subunits. Forms a heterodimeric subcomplex with Rnp4. Reconstituted enzyme missing individual protein subunits is suboptimally active, showing each subunit contributes to optimization of activity.

Its subcellular location is the cytoplasm. The catalysed reaction is Endonucleolytic cleavage of RNA, removing 5'-extranucleotides from tRNA precursor.. Part of ribonuclease P (RNase P), a protein complex that generates mature tRNA molecules by cleaving their 5'-ends. Binds RNase P RNA. The protein is Ribonuclease P protein component 1 of Pyrococcus horikoshii (strain ATCC 700860 / DSM 12428 / JCM 9974 / NBRC 100139 / OT-3).